The sequence spans 213 residues: Retinitis pigmentosa 9 protein homolog (213 aa).

The interval 1 to 61 (MSSGAGSRRP…IKEDETKPED (61 aa)) is disordered. Positions 1–147 (MSSGAGSRRP…RENKRHEKDV (147 aa)) are PIM1-binding. 2 stretches are compositionally biased toward basic and acidic residues: residues 9–21 (RPREPPEHELQRR) and 52–61 (IKEDETKPED). The CCHC-type zinc-finger motif lies at 96–114 (QCWRCKRYGHRTGDKECPF). Lys-121 is covalently cross-linked (Glycyl lysine isopeptide (Lys-Gly) (interchain with G-Cter in SUMO2)). The interval 154–213 (QLLEDSTSDDDGSSSSSSGDREKRKKRKKKEKHKKRKKEKKKKKKRKHKASKSSESSDSE) is disordered. Basic residues predominate over residues 176–204 (KRKKRKKKEKHKKRKKEKKKKKKRKHKAS). 2 positions are modified to phosphoserine; by PIM1; in vitro: Ser-204 and Ser-206.

In terms of assembly, binds to PIM1. Binds to ZNHIT4. In terms of tissue distribution, highly expressed in the testis, moderately in the kidney, liver and spleen, and weakly in the skeletal muscle and heart.

It localises to the nucleus. In terms of biological role, is thought to be a target protein for the PIM1 kinase. May play some roles in B-cell proliferation in association with PIM1. The sequence is that of Retinitis pigmentosa 9 protein homolog (rp9) from Mus musculus (Mouse).